The following is a 197-amino-acid chain: Dephospho-CoA kinase (197 aa).

Residues 3–197 (VLGLTGSIGL…IDELRGQRGS (195 aa)) form the DPCK domain. Position 11–16 (11–16 (GLGKST)) interacts with ATP.

It belongs to the CoaE family.

The protein localises to the cytoplasm. It catalyses the reaction 3'-dephospho-CoA + ATP = ADP + CoA + H(+). Its pathway is cofactor biosynthesis; coenzyme A biosynthesis; CoA from (R)-pantothenate: step 5/5. In terms of biological role, catalyzes the phosphorylation of the 3'-hydroxyl group of dephosphocoenzyme A to form coenzyme A. The protein is Dephospho-CoA kinase of Mesorhizobium japonicum (strain LMG 29417 / CECT 9101 / MAFF 303099) (Mesorhizobium loti (strain MAFF 303099)).